We begin with the raw amino-acid sequence, 341 residues long: Probable UDP-glucuronate 4-epimerase (341 aa).

The Proton acceptor role is filled by Tyr-152.

The protein belongs to the NAD(P)-dependent epimerase/dehydratase family. Requires NAD(+) as cofactor.

It carries out the reaction UDP-alpha-D-glucuronate = UDP-alpha-D-galacturonate. This chain is Probable UDP-glucuronate 4-epimerase, found in Rhizobium meliloti (strain 1021) (Ensifer meliloti).